Consider the following 179-residue polypeptide: ATP-dependent protease subunit HslV (179 aa).

The active site involves T7. 3 residues coordinate Na(+): G162, C165, and T168.

Belongs to the peptidase T1B family. HslV subfamily. In terms of assembly, a double ring-shaped homohexamer of HslV is capped on each side by a ring-shaped HslU homohexamer. The assembly of the HslU/HslV complex is dependent on binding of ATP.

It is found in the cytoplasm. It carries out the reaction ATP-dependent cleavage of peptide bonds with broad specificity.. Its activity is regulated as follows. Allosterically activated by HslU binding. Functionally, protease subunit of a proteasome-like degradation complex believed to be a general protein degrading machinery. In Bordetella bronchiseptica (strain ATCC BAA-588 / NCTC 13252 / RB50) (Alcaligenes bronchisepticus), this protein is ATP-dependent protease subunit HslV.